Here is a 474-residue protein sequence, read N- to C-terminus: MTTPSTSTTPKTLYQKVWDAHVVATPEGEAPIIYVDRHLVHEVTSPQAFSGLKVAGRKLRAPEKTFATMDHNTSTRSASLDALSPMARTQVETLAQNCKDFGVRLYDIHHPNQGIVHVMGPELGITLPGTVIVCGDSHTATHGAFGALAFGIGTSEVEHVLATQTLRQLKAKTMKIEVRGQVTDGVTAKDIVLAIIGKIGMDGGTGYVVEFCGEAIEALSMEGRMTVCNMAIEMGAKAGMVAPDQTTFDYLEGREFAPKGEDWAEAVAAWKALKTDVGAEFDATVVLDAADIAPQLTWGTNPGQVVAIDAPVPNPADEANPTIRASMEKALDYIGLTAGTPMTDVAINKVFIGSCTNSRIEDLRSAAKQAKGRKVASGVTAIVVPGSGQVKAQAEAEGLDKIFIEAGFEWRLPGCSMCLAMNDDRLEAGDRCASTSNRNFEGRQGRGSRTHLVSPAMAAAAAIAGHFVDIRKPY.

Positions 355, 415, and 418 each coordinate [4Fe-4S] cluster.

Belongs to the aconitase/IPM isomerase family. LeuC type 1 subfamily. Heterodimer of LeuC and LeuD. The cofactor is [4Fe-4S] cluster.

It carries out the reaction (2R,3S)-3-isopropylmalate = (2S)-2-isopropylmalate. The protein operates within amino-acid biosynthesis; L-leucine biosynthesis; L-leucine from 3-methyl-2-oxobutanoate: step 2/4. Functionally, catalyzes the isomerization between 2-isopropylmalate and 3-isopropylmalate, via the formation of 2-isopropylmaleate. In Shewanella sp. (strain MR-7), this protein is 3-isopropylmalate dehydratase large subunit.